Here is a 387-residue protein sequence, read N- to C-terminus: Carbamoyl phosphate synthase small chain (387 aa).

A CPSase region spans residues 1 to 189; that stretch reads MIKSAILVLE…GLPEDKQEQD (189 aa). 3 residues coordinate L-glutamine: Ser47, Gly241, and Gly243. The 188-residue stretch at 193–380 folds into the Glutamine amidotransferase type-1 domain; that stretch reads HVVAYDFGAK…IELIEQYCQK (188 aa). Cys269 serves as the catalytic Nucleophile. L-glutamine-binding residues include Leu270, Gln273, Asn311, Gly313, and Phe314. Active-site residues include His353 and Glu355.

It belongs to the CarA family. As to quaternary structure, composed of two chains; the small (or glutamine) chain promotes the hydrolysis of glutamine to ammonia, which is used by the large (or ammonia) chain to synthesize carbamoyl phosphate. Tetramer of heterodimers (alpha,beta)4.

It carries out the reaction hydrogencarbonate + L-glutamine + 2 ATP + H2O = carbamoyl phosphate + L-glutamate + 2 ADP + phosphate + 2 H(+). The enzyme catalyses L-glutamine + H2O = L-glutamate + NH4(+). It participates in amino-acid biosynthesis; L-arginine biosynthesis; carbamoyl phosphate from bicarbonate: step 1/1. Its pathway is pyrimidine metabolism; UMP biosynthesis via de novo pathway; (S)-dihydroorotate from bicarbonate: step 1/3. In terms of biological role, small subunit of the glutamine-dependent carbamoyl phosphate synthetase (CPSase). CPSase catalyzes the formation of carbamoyl phosphate from the ammonia moiety of glutamine, carbonate, and phosphate donated by ATP, constituting the first step of 2 biosynthetic pathways, one leading to arginine and/or urea and the other to pyrimidine nucleotides. The small subunit (glutamine amidotransferase) binds and cleaves glutamine to supply the large subunit with the substrate ammonia. The sequence is that of Carbamoyl phosphate synthase small chain from Photorhabdus laumondii subsp. laumondii (strain DSM 15139 / CIP 105565 / TT01) (Photorhabdus luminescens subsp. laumondii).